Reading from the N-terminus, the 258-residue chain is Type III pantothenate kinase (258 aa).

ATP is bound at residue 6–13 (DVGNTQIF). 107-110 (GADR) serves as a coordination point for substrate. Catalysis depends on aspartate 109, which acts as the Proton acceptor. Aspartate 130 lines the K(+) pocket. Threonine 133 is a binding site for ATP. Threonine 185 serves as a coordination point for substrate.

This sequence belongs to the type III pantothenate kinase family. Homodimer. NH4(+) serves as cofactor. The cofactor is K(+).

It localises to the cytoplasm. The enzyme catalyses (R)-pantothenate + ATP = (R)-4'-phosphopantothenate + ADP + H(+). It participates in cofactor biosynthesis; coenzyme A biosynthesis; CoA from (R)-pantothenate: step 1/5. Functionally, catalyzes the phosphorylation of pantothenate (Pan), the first step in CoA biosynthesis. The sequence is that of Type III pantothenate kinase from Elusimicrobium minutum (strain Pei191).